The sequence spans 424 residues: SNF1-related protein kinase regulatory subunit gamma-1 (424 aa).

At alanine 2 the chain carries N-acetylalanine. At serine 44 the chain carries Phosphoserine. 4 CBS domains span residues 63 to 131, 185 to 244, 263 to 324, and 350 to 408; these read LSSD…EPPS, TFRW…CAGL, MSKD…YHDY, and IMSG…SGYF.

This sequence belongs to the 5'-AMP-activated protein kinase gamma subunit family. As to quaternary structure, subunit of a probable heterotrimeric complex consisting of an alpha catalytic (KIN10 or KIN11) subunit, and a beta (KINB) and a gamma (KING or SNF4) non-catalytic regulatory subunits. Interacts with HXK1 in mitochondrion. In terms of processing, sumoylated by SIZ1. In terms of tissue distribution, expressed in vegetative organs and, to lower extent, in reproductive organs.

It localises to the mitochondrion. Its function is as follows. Regulatory subunit of the probable trimeric SNF1-related protein kinase (SnRK) complex, which may play a role in a signal transduction cascade regulating gene expression and carbohydrate metabolism in higher plants. The SnRK complex may also be involved in the regulation of fatty acid synthesis by phosphorylation of acetyl-CoA carboxylase and in assimilation of nitrogen by phosphorylating nitrate reductase. The sequence is that of SNF1-related protein kinase regulatory subunit gamma-1 (KING1) from Arabidopsis thaliana (Mouse-ear cress).